A 106-amino-acid chain; its full sequence is MNNIRKGDEVIVLTGRDKKRRGTVLARVDADHVLVEGVNVVKKHVKANPMANNPGGIVEKTMPIHVSNVALFNPATGKGDRVGVQEVDGRKVRVFRSNGAVVGAKA.

This sequence belongs to the universal ribosomal protein uL24 family. In terms of assembly, part of the 50S ribosomal subunit.

Functionally, one of two assembly initiator proteins, it binds directly to the 5'-end of the 23S rRNA, where it nucleates assembly of the 50S subunit. One of the proteins that surrounds the polypeptide exit tunnel on the outside of the subunit. This chain is Large ribosomal subunit protein uL24, found in Bordetella bronchiseptica (strain ATCC BAA-588 / NCTC 13252 / RB50) (Alcaligenes bronchisepticus).